Here is a 279-residue protein sequence, read N- to C-terminus: Universal stress protein MT2087 (279 aa).

It belongs to the universal stress protein A family.

In Mycobacterium tuberculosis (strain CDC 1551 / Oshkosh), this protein is Universal stress protein MT2087.